A 145-amino-acid polypeptide reads, in one-letter code: 3-hydroxyacyl-[acyl-carrier-protein] dehydratase FabZ (145 aa).

His-49 is a catalytic residue.

The protein belongs to the thioester dehydratase family. FabZ subfamily.

Its subcellular location is the cytoplasm. The catalysed reaction is a (3R)-hydroxyacyl-[ACP] = a (2E)-enoyl-[ACP] + H2O. Its function is as follows. Involved in unsaturated fatty acids biosynthesis. Catalyzes the dehydration of short chain beta-hydroxyacyl-ACPs and long chain saturated and unsaturated beta-hydroxyacyl-ACPs. The chain is 3-hydroxyacyl-[acyl-carrier-protein] dehydratase FabZ from Ehrlichia ruminantium (strain Gardel).